We begin with the raw amino-acid sequence, 369 residues long: MTKLFTPLHVGRMELANRIAMAPMTRYRASDNHVPLPIMKDYYAQRASVPGTLLITEATTISARAGGYANAPGIYNDAQIAAWKEVTDAVHAKGSYIYVQLWAVGRPANPQLLQAEGGYDLVSSSATAVSADAPTPRALSETEIYAWIADYAQAARNAVAAGFDGVEIHAANGYLIDQFTQDICNTRTDAWGGSVQGRARFALEVSRAVVEAVGADRTGIRFSPWSTFQGMRMKDPKPQFEYLAVQTAKLGLAYVHLVESRIAGGADVDATDRLDFFLRAYGKASPVIFAGGYDAESAVRAVDVEYADYDAIVGIGRPFISNPDLPFRVQNGIPFVPYDRATFYVPKDPKGYTDYAFSAEFQKAIEAAA.

FMN contacts are provided by residues 23-25 (PMT), alanine 58, glutamine 100, and histidine 169. 2 residues coordinate substrate: histidine 169 and asparagine 172. Catalysis depends on tyrosine 174, which acts as the Proton donor. FMN-binding positions include glycine 292, 316–317 (GR), and arginine 317. Tyrosine 344 contributes to the substrate binding site.

The protein belongs to the NADH:flavin oxidoreductase/NADH oxidase family. Monomer. FMN is required as a cofactor.

It catalyses the reaction dihydrochanoclavine-I aldehyde + NADP(+) = chanoclavine-I aldehyde + NADPH + H(+). The protein operates within alkaloid biosynthesis; ergot alkaloid biosynthesis. Its function is as follows. Chanoclavine-I aldehyde reductase; part of the gene cluster that mediates the biosynthesis of isofumigaclavines, fungal ergot alkaloids. The tryptophan dimethylallyltransferase ifgA catalyzes the first step of ergot alkaloid biosynthesis by condensing dimethylallyl diphosphate (DMAP) and tryptophan to form 4-dimethylallyl-L-tryptophan. The second step is catalyzed by the methyltransferase ifgB that methylates 4-dimethylallyl-L-tryptophan in the presence of S-adenosyl-L-methionine, resulting in the formation of N-methyl-dimethylallyl-L-tryptophan. The catalase ifgD and the FAD-dependent oxidoreductase ifgC then transform N-methyl-dimethylallyl-L-tryptophan to chanoclavine-I which is further oxidized by ifgE in the presence of NAD(+), resulting in the formation of chanoclavine-I aldehyde. The chanoclavine-I aldehyde reductases ifgG and/or fgaOx3 reduce chanoclavine-I aldehyde to dihydrochanoclavine-I aldehyde that spontaneously dehydrates to form 6,8-dimethyl-6,7-didehydroergoline. The festuclavine dehydrogenases ifgF1 and/or ifgF2 then catalyze the reduction of 6,8-dimethyl-6,7-didehydroergoline to form festuclavine. Hydrolysis of festuclavine by a yet undetermined cytochrome P450 monooxygenase (called ifgH) then leads to the formation of isofumigaclavine B which is in turn acetylated by ifgI to isofumigaclavine A. Penicillium roqueforti has interestingly at least two sets of genes for the consumption of chanoclavine-I aldehyde on three different loci, the OYEs ifgG/fgaOx3 and the festuclavine synthase homologs ifgF1/ifgF2. The reason for the duplication of these genes is unclear, probably to ensure the conversion of chanoclavine-I aldehyde by differential gene expression under various environmental conditions. The polypeptide is Chanoclavine-I aldehyde reductase fgaOx3 (Penicillium roqueforti (strain FM164)).